The chain runs to 372 residues: Glutamate 5-kinase (372 aa).

K14 is an ATP binding site. Substrate is bound by residues S54, D141, and N153. Position 173-174 (173-174 (TD)) interacts with ATP. The PUA domain occupies 280–358 (RGHVVIDAGA…GEIETVLGYM (79 aa)).

Belongs to the glutamate 5-kinase family.

It localises to the cytoplasm. The enzyme catalyses L-glutamate + ATP = L-glutamyl 5-phosphate + ADP. The protein operates within amino-acid biosynthesis; L-proline biosynthesis; L-glutamate 5-semialdehyde from L-glutamate: step 1/2. Functionally, catalyzes the transfer of a phosphate group to glutamate to form L-glutamate 5-phosphate. The protein is Glutamate 5-kinase of Burkholderia ambifaria (strain ATCC BAA-244 / DSM 16087 / CCUG 44356 / LMG 19182 / AMMD) (Burkholderia cepacia (strain AMMD)).